The chain runs to 150 residues: Probable deoxyuridine 5'-triphosphate nucleotidohydrolase (150 aa).

This sequence belongs to the dCTP deaminase family. Archaeal dUTPase subfamily.

The enzyme catalyses dUTP + H2O = dUMP + diphosphate + H(+). Its pathway is pyrimidine metabolism; dUMP biosynthesis; dUMP from dCTP (dUTP route): step 2/2. This enzyme is involved in nucleotide metabolism: it produces dUMP, the immediate precursor of thymidine nucleotides and it decreases the intracellular concentration of dUTP so that uracil cannot be incorporated into DNA. This is Probable deoxyuridine 5'-triphosphate nucleotidohydrolase from Methanothermobacter thermautotrophicus (strain ATCC 29096 / DSM 1053 / JCM 10044 / NBRC 100330 / Delta H) (Methanobacterium thermoautotrophicum).